The primary structure comprises 1360 residues: KN motif and ankyrin repeat domains 1 (1360 aa).

Residues 30 to 68 (PYFVETPYGFQLDLDFVKYVDDIQKGNTIKKLNIQKRRK) are KN motif; Interaction with TLN1. Positions 41 to 44 (LDLD) match the Important for binding to TLN1 motif. The Nuclear export signal 1 (NES 1) motif lies at 43–52 (LDFVKYVDDI). The short motif at 65 to 68 (KRRK) is the Nuclear localization signal 1 (NLS 1) element. The disordered stretch occupies residues 66 to 103 (RRKPSVPCPEVRAIPGHQGVWTSTESLSSSNSDDSKQC). Positions 88–103 (STESLSSSNSDDSKQC) are enriched in low complexity. The short motif at 125-134 (LETSPTFAVS) is the Nuclear export signal 2 (NES 2) element. Ser-186 carries the post-translational modification Phosphoserine. Positions 221–253 (DYNSYVPAAPTTSSMGSSVRHSPLSSGISTPVT) are disordered. Polar residues predominate over residues 230 to 253 (PTTSSMGSSVRHSPLSSGISTPVT). Positions 244 to 339 (LSSGISTPVT…SQLELLARAR (96 aa)) are interaction with PPFIBP1. Residues 260–311 (LQHIREQMAIALKRLKELEEQVRTIPVLQVKISVLQEEKRQLASQLKSQRAS) adopt a coiled-coil conformation. Ser-325 bears the Phosphoserine mark. Coiled coils occupy residues 367–394 (FRQLTADMQALERKIQDSSCEVASELRE) and 453–487 (ITEADKEIELQQQTIEALKEKIYRLEVQLKETTHD). Positions 618 to 627 (LTLLKTNLNL) match the Nuclear export signal 3 (NES 3) motif. Disordered stretches follow at residues 929–954 (SQPEVEAETAEGKHSRGHEQFPMQGS) and 983–1053 (IMKK…DTRG). Composition is skewed to basic and acidic residues over residues 938-947 (AEGKHSRGHE) and 985-995 (KKSDGNKDSNG). Positions 985–998 (KKSDGNKDSNGAKK) match the Nuclear localization signal 2 (NLS 2) motif. A compositionally biased stretch (low complexity) spans 1010–1025 (ETTSSDESSSDGSSSS). Residues 1026 to 1047 (ESDDECDTIGYPPEEEEEEEEK) show a composition bias toward acidic residues. The segment at 1081–1360 (EPEKEEIRER…PGPTHRGSFD (280 aa)) is interaction with KIF21A. One copy of the ANK 0; degenerate repeat lies at 1117 to 1154 (KDMRICLNTLQHDWFRVSSQKSAVPAMVGDYIAAFEAV). ANK repeat units follow at residues 1169-1199 (NGNTALHYSVSHSNFQIVKLLLDADVCNVDH), 1203-1236 (AGYTPIMLAALAAVEAEKDMQVVEELFSCGDVNA), 1241-1270 (AGQTALMLAVSHGRIDMVKGLLACGADVNI), 1274-1306 (EGSTALMCASEHGHVEIVKLLLAQPGCNGHLED), and 1308-1337 (DGSTALSIALEAGHKDIAVLLYAHLNFSKA). The tract at residues 1337–1360 (AQSPSTPRLGRKTSPGPTHRGSFD) is disordered.

Part of a cortical microtubule stabilization complex (CMSC) composed of KANK1, PPFIA1, PPFIBP1, ERC1/ELKS, PHLDB2/LL5beta, CLASPs, KIF21A and possibly additional interactors; within CMSCs KANK1 and PHLDB2/LL5beta appear to be the core components for targeting of microtubule-binding proteins KIF21A and CLASPs, whereas PPFIA1, PPFIBP1 and ERC1/ELKS serve as scaffolds for protein clustering. Interacts (via KN motif) with TLN1 (via R7 domain); this mediates CMSC clustering around focal adhesions. Interacts (via CC1 domain, residues 244-339) with PPFIBP1. Interacts (via ANK repeats 1-5) with KIF21A (via residues 1142-1169). Interacts with YWHAQ; the interaction requires KANK1 phosphorylation at Ser-325 and is enhanced by growth factor stimulation. Interacts with YWHAB, YWHAG, YWHAE, YWHAH, YWHAZ and SFN; the interaction requires KANK1 phosphorylation at Ser-325. Interacts with ARFGEF1; however, colocalization cannot be experimentally confirmed. Interacts with BAIAP2. Interacts with CTNNB1. Interacts (via coiled coil domain) with DAAM1 (via coiled coil domain).

Its subcellular location is the cytoplasm. The protein resides in the cell cortex. It is found in the cell projection. It localises to the ruffle membrane. The protein localises to the nucleus. Functionally, adapter protein that links structural and signaling protein complexes positioned to guide microtubule and actin cytoskeleton dynamics during cell morphogenesis. At focal adhesions (FAs) rims, organizes cortical microtubule stabilizing complexes (CMSCs) and directly interacts with major FA component TLN1, forming macromolecular assemblies positioned to control microtubule-actin crosstalk at the cell edge. Recruits KIF21A in CMSCs at axonal growth cones and regulates axon guidance by suppressing microtubule growth without inducing microtubule disassembly once it reaches the cell cortex. Interacts with ARFGEF1 and participates in establishing microtubule-organizing center (MTOC) orientation and directed cell movement in wound healing. Regulates actin stress fiber formation and cell migration by inhibiting RHOA activation in response to growth factors; this function involves phosphorylation through PI3K/Akt signaling and may depend on the competitive interaction with 14-3-3 adapter proteins to sequester them from active complexes. Inhibits the formation of lamellipodia but not of filopodia; this function may depend on the competitive interaction with BAIAP2 to block its association with activated RAC1. Inhibits fibronectin-mediated cell spreading; this function is partially mediated by BAIAP2. In the nucleus, is involved in beta-catenin-dependent activation of transcription. During cell division, may regulate DAAM1-dependent RHOA activation that signals centrosome maturation and chromosomal segregation. May also be involved in contractile ring formation during cytokinesis. Potential tumor suppressor for renal cell carcinoma. The protein is KN motif and ankyrin repeat domains 1 of Mus musculus (Mouse).